Here is a 1616-residue protein sequence, read N- to C-terminus: MAYTQTATTSALLDTVRGNNSLVNDLAKRRLYDTAVEEFNARDRRPKVNFSKVISEEQTLIATRAYPEFQITFYNTQNAVHSLAGGLRSLELEYLMMQIPYGSLTYDIGGNFASHLFKGRAYVHCCMPNLDVRDIMRHEGQKDSIELYLSRLERGGKTVPNFQKEAFDRYAEIPEDAVCHNTFQTMRHQPMQQSGRVYAIALHSIYDIPADEFGAALLRKNVHTCYAAFHFSENLLLEDSYVNLDEINACFSRDGDKLTFSFASESTLNYCHSYSNILKYVCKTYFPASNREVYMKEFLVTRVNTWFCKFSRIDTFLLYKGVAHKSVDSEQFYTAMEDAWHYKKTLAMCNSERILLEDSSSVNYWFPKMRDMVIVPLFDISLETSKRTRKEVLVSKDFVFTVLNHIRTYQAKALTYANVLSFVESIRSRVIINGVTARSEWDVDKSLLQSLSMTFYLHTKLAVLKDDLLISKFSLGSKTVCQHVWDEISLAFGNAFPSVKERLLNRKLIRVAGDALEIRVPDLYVTFHDRLVTEYKASVDMPALDIRKKMEETEVMYNALSELSVLRESDKFDVDVFSQMCQSLEVDPMTAAKVIVAVMSNESGLTLTFERPTEANVALALQDQEKASEGALVVTSREVEEPSMKGSMARGELQLAGLAGDHPESSYSKNEEIESLEQFHMATADSLIRKQMSSIVYTGPIKVQQMKNFIDSLVASLSAAVSNLVKILKDTAAIDLETRQKFGVLDVASRKWLIKPTAKSHAWGVVETHARKYHVALLEYDEQGVVTCDDWRRVAVSSESVVYSDMAKLRTLRRLLRNGEPHVSSAKVVLVDGVPGCGKTKEILSRVNFDEDLILVPGKQAAEMIRRRANSSGIIVATKDNVKTVDSFMMNFGKSTRCQFKRLFIDEGLMLHTGCVNFLVAMSLCEIAYVYGDTQQIPYINRVSGFPYPAHFAKLEVDEVETRRTTLRCPADVTHYLNRRYEGFVMSTSSVKKSVSQEMVGGAAVINPISKPLHGKILTFTQSDKEALLSRGYSDVHTVHEVQGETYSDVSLVRLTPTPVSIIAGDSPHVLVALSRHTCSLKYYTVVMDPLVSIIRDLEKLSSYLLDMYKVDAGTQXQLQIDSVFKGSNLFVAAPKTGDISDMQFYYDKCLPGNSTMMNNFDAVTMRLTDISLNVKDCILDMSKSVAAPKDQIKPLIPMVRTAAEMPRQTGLLENLVAMIKRNFNAPELSGIIDIENTASLVVDKFFDSYLLKEKRKPNKNVSLFSRESLNRWLEKQEQVTIGQLADFDFVDLPAVDQYRHMYKAQPKQKLDTSIQTEYPALQTIVYHSKKINAIFGPLFSELTRQLLDSVDSSRFLFFTRKTPAQIEDFFGDLDSHVPMDVLELDISKYDKSQNEFHCAVEYEIWRRLGFEDFLGEVWKQGHRKTTLKDYTAGIKTCIWYQRKSGDVTTFIGNTVIIAACLASMLPMEKIIKGAFCGDDSLLYFPKGCEFPDVQHSANLMWNFEAKLFKKQYGYFCGRYVIHHDRGCIVYYDPLKLISKLGAKHIKDWEHLEEFRRSLCDVAVSLNNCAYYTQLDDAVWEVHKTAPPGSFVYKSLVKYLSDKVLFRSLFIDGSSC.

The methyltransferase stretch occupies residues 50 to 458 (FSKVISEEQT…QSLSMTFYLH (409 aa)). The region spanning 72–281 (TFYNTQNAVH…HSYSNILKYV (210 aa)) is the Alphavirus-like MT domain. One can recognise a (+)RNA virus helicase ATP-binding domain in the interval 801–963 (VVYSDMAKLR…KLEVDEVETR (163 aa)). The interval 830 to 1085 (LVDGVPGCGK…RHTCSLKYYT (256 aa)) is helicase. ATP is bound at residue 833-840 (GVPGCGKT). In terms of domain architecture, (+)RNA virus helicase C-terminal spans 964–1116 (RTTLRCPADV…DMYKVDAGTQ (153 aa)). One can recognise a RdRp catalytic domain in the interval 1380–1493 (MDVLELDISK…YFPKGCEFPD (114 aa)).

This sequence belongs to the ssRNA positive-strand viruses RNA-directed RNA polymerase family. As to quaternary structure, heterodimer of a large and a small subunit. Interacts, via its helicase region, with the Nicotiana tabacum arginine decarboxylase 1A (ADC1A) C-terminal internal region.

It catalyses the reaction RNA(n) + a ribonucleoside 5'-triphosphate = RNA(n+1) + diphosphate. The enzyme catalyses ATP + H2O = ADP + phosphate + H(+). Its function is as follows. Is an RNA-dependent RNA polymerase active in viral RNA replication. Is a methyltransferase active in RNA capping and an RNA helicase. Methyltransferase displays a cytoplasmic capping enzyme activity. This function is necessary since all viral RNAs are synthesized in the cytoplasm, and host capping enzymes are restricted to the nucleus. Helicase region probably exhibits NTPase and RNA unwinding activities (Potential). It also acts as a suppressor of RNA-mediated gene silencing, also known as post-transcriptional gene silencing (PTGS), a mechanism of plant viral defense that limits the accumulation of viral RNAs. May mediate silencing suppression through either inhibition of HEN1-mediated siRNA or siRNA demethylation. The sequence is that of Replicase large subunit from Nicotiana tabacum (Common tobacco).